The chain runs to 111 residues: Small ribosomal subunit protein bS16 (111 aa).

Belongs to the bacterial ribosomal protein bS16 family.

The sequence is that of Small ribosomal subunit protein bS16 from Rickettsia felis (strain ATCC VR-1525 / URRWXCal2) (Rickettsia azadi).